The chain runs to 212 residues: Large ribosomal subunit protein bL25 (212 aa).

The interval 183–212 (HDLPVASIHKPKGAKADDAEGEEGEEGGEE) is disordered. Residues 201-212 (AEGEEGEEGGEE) show a composition bias toward acidic residues.

Belongs to the bacterial ribosomal protein bL25 family. CTC subfamily. In terms of assembly, part of the 50S ribosomal subunit; part of the 5S rRNA/L5/L18/L25 subcomplex. Contacts the 5S rRNA. Binds to the 5S rRNA independently of L5 and L18.

In terms of biological role, this is one of the proteins that binds to the 5S RNA in the ribosome where it forms part of the central protuberance. The protein is Large ribosomal subunit protein bL25 of Marinobacter nauticus (strain ATCC 700491 / DSM 11845 / VT8) (Marinobacter aquaeolei).